The sequence spans 108 residues: Small ribosomal subunit protein uS10 (108 aa).

It belongs to the universal ribosomal protein uS10 family. In terms of assembly, part of the 30S ribosomal subunit.

Functionally, involved in the binding of tRNA to the ribosomes. The sequence is that of Small ribosomal subunit protein uS10 from Mycoplasma pneumoniae (strain ATCC 29342 / M129 / Subtype 1) (Mycoplasmoides pneumoniae).